The sequence spans 198 residues: HTH-type transcriptional regulator BetI (198 aa).

The HTH tetR-type domain occupies 8–68; the sequence is PLRRRELIDA…ATMRHLLREL (61 aa). Positions 31–50 form a DNA-binding region, H-T-H motif; it reads TVAQIAHEAGVSPALAHHYF.

The protein operates within amine and polyamine biosynthesis; betaine biosynthesis via choline pathway [regulation]. Its function is as follows. Repressor involved in the biosynthesis of the osmoprotectant glycine betaine. It represses transcription of the choline transporter BetT and the genes of BetAB involved in the synthesis of glycine betaine. The protein is HTH-type transcriptional regulator BetI of Brucella canis (strain ATCC 23365 / NCTC 10854 / RM-666).